Consider the following 297-residue polypeptide: Trans-enoyl reductase TOXD (297 aa).

Residues S162–T165 and Y203 each bind NADP(+).

The protein belongs to the zinc-containing alcohol dehydrogenase family. In terms of assembly, monomer.

Trans-enoyl reductase; part of the diffuse TOX2 gene cluster that mediates the biosynthesis of the HC-toxin, cyclic tetrapeptide of structure cyclo(D-Pro-L-Ala-D-Ala-L-Aeo), where Aeo stands for 2-amino-9,10-epoxi-8-oxodecanoic acid. HC-toxin is a determinant of specificity and virulence in the interaction between the producing fungus and its host, maize. TOXD does not seem to play a role in HC-toxin biosynthesis. This chain is Trans-enoyl reductase TOXD, found in Cochliobolus carbonum (Maize leaf spot fungus).